The primary structure comprises 282 residues: Nucleotide-binding protein ABO_0549 (282 aa).

Residue 8–15 coordinates ATP; it reads GRSGSGKT. Residue 59–62 participates in GTP binding; sequence DARN.

This sequence belongs to the RapZ-like family.

Displays ATPase and GTPase activities. The sequence is that of Nucleotide-binding protein ABO_0549 from Alcanivorax borkumensis (strain ATCC 700651 / DSM 11573 / NCIMB 13689 / SK2).